Consider the following 207-residue polypeptide: Germin-like protein 1 (207 aa).

A signal peptide spans Met1–Asp17. Residues Cys23 and Cys38 are joined by a disulfide bond. The region spanning Phe51–Lys197 is the Cupin type-1 domain. A glycan (N-linked (GlcNAc...) asparagine) is linked at Asn58. The Mn(2+) site is built by His99, His101, Glu106, and His145.

It belongs to the germin family. As to quaternary structure, oligomer (believed to be a pentamer but probably hexamer).

It localises to the secreted. The protein localises to the extracellular space. Its subcellular location is the apoplast. Functionally, may play a role in plant defense. Probably has no oxalate oxidase activity even if the active site is conserved. In Brassica napus (Rape), this protein is Germin-like protein 1 (GER1).